We begin with the raw amino-acid sequence, 200 residues long: ATP-dependent Clp protease proteolytic subunit 3 (200 aa).

Serine 101 serves as the catalytic Nucleophile. Residue histidine 126 is part of the active site.

The protein belongs to the peptidase S14 family. In terms of assembly, fourteen ClpP subunits assemble into 2 heptameric rings which stack back to back to give a disk-like structure with a central cavity, resembling the structure of eukaryotic proteasomes.

The protein localises to the cytoplasm. The enzyme catalyses Hydrolysis of proteins to small peptides in the presence of ATP and magnesium. alpha-casein is the usual test substrate. In the absence of ATP, only oligopeptides shorter than five residues are hydrolyzed (such as succinyl-Leu-Tyr-|-NHMec, and Leu-Tyr-Leu-|-Tyr-Trp, in which cleavage of the -Tyr-|-Leu- and -Tyr-|-Trp bonds also occurs).. Functionally, cleaves peptides in various proteins in a process that requires ATP hydrolysis. Has a chymotrypsin-like activity. Plays a major role in the degradation of misfolded proteins. The polypeptide is ATP-dependent Clp protease proteolytic subunit 3 (Synechococcus sp. (strain CC9605)).